The primary structure comprises 204 residues: Peptide deformylase (204 aa).

2 residues coordinate Fe cation: C131 and H174. The active site involves E175. H178 provides a ligand contact to Fe cation.

Belongs to the polypeptide deformylase family. Requires Fe(2+) as cofactor.

The enzyme catalyses N-terminal N-formyl-L-methionyl-[peptide] + H2O = N-terminal L-methionyl-[peptide] + formate. Functionally, removes the formyl group from the N-terminal Met of newly synthesized proteins. Requires at least a dipeptide for an efficient rate of reaction. N-terminal L-methionine is a prerequisite for activity but the enzyme has broad specificity at other positions. The polypeptide is Peptide deformylase (Streptococcus thermophilus (strain CNRZ 1066)).